A 166-amino-acid polypeptide reads, in one-letter code: Endoribonuclease YbeY (166 aa).

Residues His-111, His-115, and His-121 each coordinate Zn(2+). Positions 141-166 (LGYPDPYADDESADHPHSDTPSKDHE) are disordered. Positions 153-166 (ADHPHSDTPSKDHE) are enriched in basic and acidic residues.

This sequence belongs to the endoribonuclease YbeY family. It depends on Zn(2+) as a cofactor.

The protein resides in the cytoplasm. Single strand-specific metallo-endoribonuclease involved in late-stage 70S ribosome quality control and in maturation of the 3' terminus of the 16S rRNA. The chain is Endoribonuclease YbeY from Pseudomonas syringae pv. tomato (strain ATCC BAA-871 / DC3000).